The chain runs to 408 residues: GPI transamidase component GAB1 homolog (408 aa).

A run of 10 helical transmembrane segments spans residues 9–29 (LLGLLSISFFLQWYLANTWIA), 66–86 (VFYQSPLLLILNYCCELLGGI), 88–108 (VTRFVYTSISTMGGLFVYLIA), 125–145 (PLWISVIYLLNPLTFLPGIAC), 149–169 (MILNFTTLMTIYFASCGSYAI), 207–227 (IFVVFLFYLAGLIITSGFFLN), 266–286 (FFLFVFAILPLMFVLPVSIRL), 303–323 (LFKAYPSICDLSIFLSLLPIF), 339–359 (AIVFALVLGSAFYHSWITLGC), and 370–390 (LILALGLSLKIMDFLKALLLV). The tract at residues 247–267 (PNLGLWWYFFTEMFNEFRTFF) is may be involved in recognition of long-chain fatty acids in GPI.

The protein belongs to the PIGU family. As to quaternary structure, forms a complex with PIG-S homolog, PIG-T homolog and GPI8.

It is found in the endoplasmic reticulum membrane. Its pathway is glycolipid biosynthesis; glycosylphosphatidylinositol-anchor biosynthesis. In terms of biological role, component of the GPI transamidase complex. May be involved in the recognition of either the GPI attachment signal or the lipid portion of GPI. This is GPI transamidase component GAB1 homolog from Schizosaccharomyces pombe (strain 972 / ATCC 24843) (Fission yeast).